The primary structure comprises 606 residues: Mannan endo-1,4-beta-mannosidase A (606 aa).

Residues 1-19 (MKSLNVILTLLSLIISVLS) form the signal peptide. The CBM6 domain occupies 22-140 (VYYEAEDGKL…WMWVDAFVIN (119 aa)). The 295-residue stretch at 164 to 458 (PAAKKLYDFL…FNHKTVMNMD (295 aa)) folds into the GH26 domain. Trp-285 lines the substrate pocket. Glu-318 (proton donor) is an active-site residue. Substrate-binding residues include Trp-323 and Tyr-378. The Nucleophile role is filled by Glu-406. The tract at residues 472–489 (SGSSHNGNSESNSNTGNS) is linker. CBM10 domains lie at 491–527 (ECWSINLGYPCCIGDYVVTTDENGDWGVENNEWCGIV), 530–566 (SCWSEPLGYPCCVGNTVISADESGDWGVENNEWCGIV), and 569–605 (SCWAEFLGYPCCVGNTVISTDEFGDWGVENDDWCGIL). Trp-493 contributes to the substrate binding site.

It belongs to the glycosyl hydrolase 26 family.

The catalysed reaction is Random hydrolysis of (1-&gt;4)-beta-D-mannosidic linkages in mannans, galactomannans and glucomannans.. Functionally, hydrolyzes 1,4-beta linked polysaccharide backbones of mannans, one of the major hemicellulose components in hardwoods and softwoods. Shows very high activity against mannohexaose but not against mannopentaose and smaller mannooligosaccharides. The major products released from mannooligosaccharide hydrolysis are mannose and mannobiose. The reiterated 40 AA domain is involved in binding the cellulase-hemicellulase complex. In Piromyces sp, this protein is Mannan endo-1,4-beta-mannosidase A (MANA).